The sequence spans 273 residues: Dermonecrotic toxin LruSicTox-alphaIC1c (273 aa).

Histidine 5 is a catalytic residue. Mg(2+) contacts are provided by glutamate 25 and aspartate 27. Histidine 41 (nucleophile) is an active-site residue. Cystine bridges form between cysteine 45-cysteine 51 and cysteine 47-cysteine 190. Residue aspartate 85 coordinates Mg(2+).

This sequence belongs to the arthropod phospholipase D family. Class II subfamily. It depends on Mg(2+) as a cofactor. In terms of tissue distribution, expressed by the venom gland.

Its subcellular location is the secreted. It carries out the reaction an N-(acyl)-sphingosylphosphocholine = an N-(acyl)-sphingosyl-1,3-cyclic phosphate + choline. The catalysed reaction is an N-(acyl)-sphingosylphosphoethanolamine = an N-(acyl)-sphingosyl-1,3-cyclic phosphate + ethanolamine. It catalyses the reaction a 1-acyl-sn-glycero-3-phosphocholine = a 1-acyl-sn-glycero-2,3-cyclic phosphate + choline. The enzyme catalyses a 1-acyl-sn-glycero-3-phosphoethanolamine = a 1-acyl-sn-glycero-2,3-cyclic phosphate + ethanolamine. Functionally, dermonecrotic toxins cleave the phosphodiester linkage between the phosphate and headgroup of certain phospholipids (sphingolipid and lysolipid substrates), forming an alcohol (often choline) and a cyclic phosphate. This toxin acts on sphingomyelin (SM). It may also act on ceramide phosphoethanolamine (CPE), lysophosphatidylcholine (LPC) and lysophosphatidylethanolamine (LPE), but not on lysophosphatidylserine (LPS), and lysophosphatidylglycerol (LPG). It acts by transphosphatidylation, releasing exclusively cyclic phosphate products as second products. Induces dermonecrosis, hemolysis, increased vascular permeability, edema, inflammatory response, and platelet aggregation. The sequence is that of Dermonecrotic toxin LruSicTox-alphaIC1c from Loxosceles rufescens (Mediterranean recluse spider).